Reading from the N-terminus, the 182-residue chain is MTFEQLIPLIIMAFALGMDAFSVSLGMGMMALKIRQILYIGVTIGIFHIIMPFIGMVLGRVLSEQYGDIAHFAGAILLIGLGFYIVYSSILENEETRTTPIGISLFVFAFGVSIDSFSVGLSLGIYGAQTIITILLFGFVSMLLAWTGLFIGRHAKGMLGTYGEIVGGIILVGFGLYLLFPI.

Helical transmembrane passes span 6 to 26, 37 to 57, 71 to 91, 101 to 121, 131 to 151, and 162 to 182; these read LIPL…VSLG, ILYI…IGMV, HFAG…SSIL, IGIS…SVGL, IITI…GLFI, and YGEI…LFPI.

The protein belongs to the MntP (TC 9.B.29) family.

The protein localises to the cell membrane. In terms of biological role, probably functions as a manganese efflux pump. The sequence is that of Putative manganese efflux pump MntP from Bacillus thuringiensis subsp. konkukian (strain 97-27).